Reading from the N-terminus, the 438-residue chain is UDP-N-acetyl-D-mannosamine dehydrogenase (438 aa).

NAD(+)-binding residues include Tyr-21, Ile-22, Asp-41, Arg-46, Thr-93, and Thr-131. Arg-160, Val-161, Lys-212, Asn-216, Arg-219, His-250, Arg-252, and Gly-263 together coordinate UDP-N-acetyl-alpha-D-mannosaminouronate. The Proton donor/acceptor role is filled by Lys-212. The active-site Nucleophile is Cys-266. Positions 323 and 324 each coordinate UDP-N-acetyl-alpha-D-mannosaminouronate. An NAD(+)-binding site is contributed by Arg-331. Lys-409 is a UDP-N-acetyl-alpha-D-mannosaminouronate binding site.

The protein belongs to the UDP-glucose/GDP-mannose dehydrogenase family. In terms of assembly, homotetramer; probably dimer of dimers.

The enzyme catalyses UDP-N-acetyl-alpha-D-mannosamine + 2 NAD(+) + H2O = UDP-N-acetyl-alpha-D-mannosaminouronate + 2 NADH + 3 H(+). Its function is as follows. Catalyzes the four-electron oxidation of UDP-N-acetyl-D-mannosamine (UDP-ManNAc), reducing NAD(+) and releasing UDP-N-acetylmannosaminuronic acid (UDP-ManNAcA). The protein is UDP-N-acetyl-D-mannosamine dehydrogenase (wecC) of Methanococcus aeolicus (strain ATCC BAA-1280 / DSM 17508 / OCM 812 / Nankai-3).